A 409-amino-acid polypeptide reads, in one-letter code: Broad specificity amino-acid racemase (409 aa).

The signal sequence occupies residues 1–24; the sequence is MPFRRTLLAASLVLLITGQAPLYA. C71 and C97 are oxidised to a cystine. K75 serves as the catalytic Proton acceptor. An N6-(pyridoxal phosphate)lysine modification is found at K75. R174 contacts substrate. Y301 acts as the Proton acceptor in catalysis. M349 is a binding site for substrate.

The protein belongs to the alanine racemase family. Bsr subfamily. As to quaternary structure, monomer. Forms a head-to-tail homodimer in the structure. The cofactor is pyridoxal 5'-phosphate.

Its subcellular location is the periplasm. It catalyses the reaction an L-alpha-amino acid = a D-alpha-amino acid. The catalysed reaction is L-lysine = D-lysine. It carries out the reaction L-arginine = D-arginine. The enzyme catalyses L-alanine = D-alanine. Activity is enhanced by Co(2+), Mn(2+) and Sr(2+), and decreased by Cu(2+). Its function is as follows. Amino-acid racemase that catalyzes the interconversion of L-lysine and D-lysine, and L-arginine and D-arginine. To a lesser extent, is also able to interconvert alanine and isoleucine enantiomers. The sequence is that of Broad specificity amino-acid racemase from Pseudomonas putida (Arthrobacter siderocapsulatus).